Reading from the N-terminus, the 122-residue chain is Large ribosomal subunit protein uL14 (122 aa).

Belongs to the universal ribosomal protein uL14 family. As to quaternary structure, part of the 50S ribosomal subunit. Forms a cluster with proteins L3 and L19. In the 70S ribosome, L14 and L19 interact and together make contacts with the 16S rRNA in bridges B5 and B8.

Functionally, binds to 23S rRNA. Forms part of two intersubunit bridges in the 70S ribosome. The sequence is that of Large ribosomal subunit protein uL14 from Burkholderia lata (strain ATCC 17760 / DSM 23089 / LMG 22485 / NCIMB 9086 / R18194 / 383).